The primary structure comprises 712 residues: Polyphosphate kinase (712 aa).

Asn49 lines the ATP pocket. Mg(2+) contacts are provided by Arg398 and Arg428. His458 acts as the Phosphohistidine intermediate in catalysis. 3 residues coordinate ATP: Tyr491, Arg587, and His615.

It belongs to the polyphosphate kinase 1 (PPK1) family. Mg(2+) serves as cofactor. Post-translationally, an intermediate of this reaction is the autophosphorylated ppk in which a phosphate is covalently linked to a histidine residue through a N-P bond.

The enzyme catalyses [phosphate](n) + ATP = [phosphate](n+1) + ADP. In terms of biological role, catalyzes the reversible transfer of the terminal phosphate of ATP to form a long-chain polyphosphate (polyP). This Prochlorococcus marinus (strain MIT 9313) protein is Polyphosphate kinase.